A 370-amino-acid chain; its full sequence is tRNA N6-adenosine threonylcarbamoyltransferase (370 aa).

2 residues coordinate Fe cation: His-122 and His-126. Substrate-binding positions include 153–157 (LLSGG), Asp-186, Gly-199, and Asn-298. Position 326 (Asp-326) interacts with Fe cation.

Belongs to the KAE1 / TsaD family. Requires Fe(2+) as cofactor.

The protein localises to the cytoplasm. The catalysed reaction is L-threonylcarbamoyladenylate + adenosine(37) in tRNA = N(6)-L-threonylcarbamoyladenosine(37) in tRNA + AMP + H(+). Required for the formation of a threonylcarbamoyl group on adenosine at position 37 (t(6)A37) in tRNAs that read codons beginning with adenine. Is involved in the transfer of the threonylcarbamoyl moiety of threonylcarbamoyl-AMP (TC-AMP) to the N6 group of A37, together with TsaE and TsaB. TsaD likely plays a direct catalytic role in this reaction. In Granulibacter bethesdensis (strain ATCC BAA-1260 / CGDNIH1), this protein is tRNA N6-adenosine threonylcarbamoyltransferase.